The primary structure comprises 230 residues: Urease accessory protein UreE (230 aa).

2 stretches are compositionally biased toward basic and acidic residues: residues 182 to 193 (HVHVDSPLDEPH) and 204 to 230 (SHGD…DHKH). A disordered region spans residues 182 to 230 (HVHVDSPLDEPHGSGLHVHAIHSHGDGHSHSHSHDHDHDHRHDDHDHKH).

Belongs to the UreE family.

The protein resides in the cytoplasm. Its function is as follows. Involved in urease metallocenter assembly. Binds nickel. Probably functions as a nickel donor during metallocenter assembly. This is Urease accessory protein UreE from Yersinia mollaretii.